The chain runs to 838 residues: Translation initiation factor IF-2 (838 aa).

The disordered stretch occupies residues 50–108; it reads VQSGKKPESPEKKDIKQNTQKEAPETQTQQKPIEQEVETKQNIDSTPIKVEPKQESLAS. Basic and acidic residues predominate over residues 54-65; sequence KKPESPEKKDIK. The segment covering 66–81 has biased composition (polar residues); sequence QNTQKEAPETQTQQKP. Residues 337 to 506 enclose the tr-type G domain; that stretch reads SRAPVVTIMG…LLQAELLELK (170 aa). The tract at residues 346 to 353 is G1; sequence GHVDHGKT. Residue 346–353 coordinates GTP; it reads GHVDHGKT. A G2 region spans residues 371 to 375; it reads GITQH. The tract at residues 392 to 395 is G3; sequence DTPG. Residues 392–396 and 446–449 contribute to the GTP site; these read DTPGH and NKMD. Residues 446 to 449 form a G4 region; that stretch reads NKMD. Residues 482 to 484 are G5; the sequence is SAK.

The protein belongs to the TRAFAC class translation factor GTPase superfamily. Classic translation factor GTPase family. IF-2 subfamily.

The protein resides in the cytoplasm. One of the essential components for the initiation of protein synthesis. Protects formylmethionyl-tRNA from spontaneous hydrolysis and promotes its binding to the 30S ribosomal subunits. Also involved in the hydrolysis of GTP during the formation of the 70S ribosomal complex. The chain is Translation initiation factor IF-2 from Campylobacter fetus subsp. fetus (strain 82-40).